A 740-amino-acid chain; its full sequence is MEHTYQYSWIIPFIPLPVPILLGGGLLLFPTATKNLRRTWSFLSIFLLSIVMIFSLYLSIQQIIISCIHQNVWSWTINNDLSFEFGYFIDPLTCIMLILITTVGILVLIYSDNYMSHDQGYLRFFAYMGFFNTSMLGLVTSSNLIQIYFFWELVGMCSYLLIGFWFTRPIAANACQKAFVTNRVGDFGLLLGILGLYWVTGSFEFQDLFEIFNNLILNNRVNLLFLTLCAFLLFMGPIAKSAQFPLHVWLPDAMEGPTPISALIHAATMVAAGIFLVARLLPLFIVIPSIMYIISLIGIITILLGATLALAQKDIKRGLAYSTMSQLGYMMLALGMGSYRSALFHLITHAYSKALLFLGSGSIIHSMEAIVGYSPDKSQNMILMGGLTKHVPITKTAFLLGTLSLCGIPPLACFWSKDEILTDSLLFSPIFAIIACSTAGLTAFYMFRIYLLTFEGHLNTYFLNYSGKKSSSFYSISLWGKEDEKKINRNFCLVPLLTMNNKKGASFFSKKTYKINNNVRNKTLITVANGALNKRTFYYPHESDNTILFPMLVLLLFTLFIGAIGIPLNQEGFDILSKLFTPSINLLHKNSTNFVDWYEFFRNATFSVSIAFFGIFIAYCLYKPFYSSLLNLTLLNSFQKWSSNPICWEKLINCLYNWSYNRAYIDTFYKKSLTESIRRLAKQIHFFDKRIIDGITNGVGITSFFVAEFTKYIGGSRISSYLFLYLSYVFLFFLFLKILN.

The next 16 membrane-spanning stretches (helical) occupy residues 9-29 (WIIPFIPLPVPILLGGGLLLF), 40-60 (WSFLSIFLLSIVMIFSLYLSI), 89-109 (IDPLTCIMLILITTVGILVLI), 125-145 (FAYMGFFNTSMLGLVTSSNLI), 147-167 (IYFFWELVGMCSYLLIGFWFT), 185-205 (GDFGLLLGILGLYWVTGSFEF), 221-241 (VNLLFLTLCAFLLFMGPIAKS), 258-278 (TPISALIHAATMVAAGIFLVA), 283-303 (LFIVIPSIMYIISLIGIITIL), 327-347 (LGYMMLALGMGSYRSALFHLI), 354-374 (ALLFLGSGSIIHSMEAIVGYS), 396-416 (TAFLLGTLSLCGIPPLACFWS), 425-445 (LLFSPIFAIIACSTAGLTAFY), 547-567 (ILFPMLVLLLFTLFIGAIGIP), 606-626 (FSVSIAFFGIFIAYCLYKPFY), and 718-738 (ISSYLFLYLSYVFLFFLFLKI).

Belongs to the complex I subunit 5 family. NDH is composed of at least 16 different subunits, 5 of which are encoded in the nucleus.

It localises to the plastid. The protein localises to the chloroplast thylakoid membrane. The catalysed reaction is a plastoquinone + NADH + (n+1) H(+)(in) = a plastoquinol + NAD(+) + n H(+)(out). The enzyme catalyses a plastoquinone + NADPH + (n+1) H(+)(in) = a plastoquinol + NADP(+) + n H(+)(out). In terms of biological role, NDH shuttles electrons from NAD(P)H:plastoquinone, via FMN and iron-sulfur (Fe-S) centers, to quinones in the photosynthetic chain and possibly in a chloroplast respiratory chain. The immediate electron acceptor for the enzyme in this species is believed to be plastoquinone. Couples the redox reaction to proton translocation, and thus conserves the redox energy in a proton gradient. The sequence is that of NAD(P)H-quinone oxidoreductase subunit 5, chloroplastic (ndhF) from Aethionema cordifolium (Lebanon stonecress).